The following is a 310-amino-acid chain: Isoflavone reductase homolog P3 (310 aa).

NADP(+) is bound by residues 12–18, arginine 37, and lysine 46; that span reads GGTGYIG. Catalysis depends on lysine 134, which acts as the Proton acceptor. Position 138 (arginine 138) interacts with NADP(+).

This sequence belongs to the NmrA-type oxidoreductase family. Isoflavone reductase subfamily.

It is found in the cytoplasm. The sequence is that of Isoflavone reductase homolog P3 from Arabidopsis thaliana (Mouse-ear cress).